The following is a 344-amino-acid chain: Dihydroorotase (344 aa).

Zn(2+) contacts are provided by His-14 and His-16. Substrate contacts are provided by residues 16-18 and Asn-42; that span reads HLR. Zn(2+)-binding residues include Lys-100, His-137, and His-175. Lys-100 is modified (N6-carboxylysine). His-137 is a substrate binding site. Substrate is bound at residue Leu-220. Asp-248 is a binding site for Zn(2+). The active site involves Asp-248. Substrate-binding residues include His-252 and Ala-264.

Belongs to the metallo-dependent hydrolases superfamily. DHOase family. Class II DHOase subfamily. As to quaternary structure, homodimer. Zn(2+) is required as a cofactor.

The catalysed reaction is (S)-dihydroorotate + H2O = N-carbamoyl-L-aspartate + H(+). It functions in the pathway pyrimidine metabolism; UMP biosynthesis via de novo pathway; (S)-dihydroorotate from bicarbonate: step 3/3. Its function is as follows. Catalyzes the reversible cyclization of carbamoyl aspartate to dihydroorotate. This is Dihydroorotase from Ralstonia pickettii (strain 12J).